A 405-amino-acid polypeptide reads, in one-letter code: S-adenosylmethionine sensor upstream of mTORC1 (405 aa).

The interval 1–34 is disordered; that stretch reads MEPGAGGRNTARAQRAGSPNTPPPREQERKLEQE. Over residues 25 to 34 the composition is skewed to basic and acidic residues; the sequence is REQERKLEQE. Residues Arg95, Gly172, Asp190, Asp202, Phe203, and Ser244 each contribute to the S-adenosyl-L-methionine site.

This sequence belongs to the BMT2/SAMTOR family. In terms of assembly, interacts with the DEPDC5 subunit of the GATOR1 complex; interaction is disrupted when SAMTOR binds S-adenosyl-L-methionine. Interacts with the KICSTOR complex; interaction is disrupted when SAMTOR binds S-adenosyl-L-methionine.

Its function is as follows. S-adenosyl-L-methionine-binding protein that acts as an inhibitor of mTORC1 signaling via interaction with the GATOR1 and KICSTOR complexes. Acts as a sensor of S-adenosyl-L-methionine to signal methionine sufficiency to mTORC1: in presence of methionine, binds S-adenosyl-L-methionine, leading to disrupt interaction with the GATOR1 and KICSTOR complexes and promote mTORC1 signaling. Upon methionine starvation, S-adenosyl-L-methionine levels are reduced, thereby promoting the association with GATOR1 and KICSTOR, leading to inhibit mTORC1 signaling. Probably also acts as a S-adenosyl-L-methionine-dependent methyltransferase (Potential). In Homo sapiens (Human), this protein is S-adenosylmethionine sensor upstream of mTORC1.